Reading from the N-terminus, the 141-residue chain is Large ribosomal subunit protein uL22 (141 aa).

Residues 110–141 (EEKKTVAKKTTTTKAPAKKTTSTKKATAKKES) form a disordered region. Low complexity predominate over residues 117-134 (KKTTTTKAPAKKTTSTKK).

It belongs to the universal ribosomal protein uL22 family. Part of the 50S ribosomal subunit.

In terms of biological role, this protein binds specifically to 23S rRNA; its binding is stimulated by other ribosomal proteins, e.g. L4, L17, and L20. It is important during the early stages of 50S assembly. It makes multiple contacts with different domains of the 23S rRNA in the assembled 50S subunit and ribosome. Functionally, the globular domain of the protein is located near the polypeptide exit tunnel on the outside of the subunit, while an extended beta-hairpin is found that lines the wall of the exit tunnel in the center of the 70S ribosome. In Campylobacter jejuni subsp. doylei (strain ATCC BAA-1458 / RM4099 / 269.97), this protein is Large ribosomal subunit protein uL22.